We begin with the raw amino-acid sequence, 217 residues long: Homeobox protein Hox-B7 (217 aa).

Residues 126 to 131 (IYPWMR) carry the Antp-type hexapeptide motif. Positions 137-196 (RKRGRQTYTRYQTLELEKEFHYNRYLTRRRRIEIAHTLCLTERQIKIWFQNRRMKWKKEN) form a DNA-binding region, homeobox. The disordered stretch occupies residues 194–217 (KENKTAGPGTTGQDRAEAEEEEEE).

It belongs to the Antp homeobox family. In terms of assembly, forms a DNA-binding heterodimer with transcription factor PBX1.

The protein localises to the nucleus. Functionally, sequence-specific transcription factor which is part of a developmental regulatory system that provides cells with specific positional identities on the anterior-posterior axis. This chain is Homeobox protein Hox-B7 (HOXB7), found in Homo sapiens (Human).